The sequence spans 340 residues: Phosphoribosylformylglycinamidine cyclo-ligase (340 aa).

This sequence belongs to the AIR synthase family.

Its subcellular location is the cytoplasm. It catalyses the reaction 2-formamido-N(1)-(5-O-phospho-beta-D-ribosyl)acetamidine + ATP = 5-amino-1-(5-phospho-beta-D-ribosyl)imidazole + ADP + phosphate + H(+). The protein operates within purine metabolism; IMP biosynthesis via de novo pathway; 5-amino-1-(5-phospho-D-ribosyl)imidazole from N(2)-formyl-N(1)-(5-phospho-D-ribosyl)glycinamide: step 2/2. This Streptococcus pneumoniae (strain CGSP14) protein is Phosphoribosylformylglycinamidine cyclo-ligase.